The sequence spans 308 residues: MSEQFLYFLQQMFNGVTLGSTYALIAIGYTMVYGIIGMINFAHGEVYMIGSYVSFMIIAALMMMGIDTSWLLVAAGFIGAIIIASAYGWSIERVAYRPVRNSKRLIALISAIGMSIFLQNYVSLTEGSRDVALPSLFNGQWIVGSSENFSASITTMQAVIWIVTFLAMLALTIFIRYSRMGRACRACAEDLKMASLLGINTDRVIALTFVIGAAMAAVAGVLLGQFYGVINPYIGFMAGMKAFTAAVLGGIGSIPGAMIGGLILGVAEALSSAYLSTEYKDVVSFALLILVLLVMPTGILGRPEVEKV.

The Cytoplasmic portion of the chain corresponds to 1 to 21; the sequence is MSEQFLYFLQQMFNGVTLGST. A helical transmembrane segment spans residues 22-42; it reads YALIAIGYTMVYGIIGMINFA. Over 43–45 the chain is Periplasmic; the sequence is HGE. A helical membrane pass occupies residues 46–66; sequence VYMIGSYVSFMIIAALMMMGI. Topologically, residues 67–70 are cytoplasmic; sequence DTSW. A helical transmembrane segment spans residues 71–91; sequence LLVAAGFIGAIIIASAYGWSI. The Periplasmic portion of the chain corresponds to 92–104; that stretch reads ERVAYRPVRNSKR. A helical transmembrane segment spans residues 105–125; it reads LIALISAIGMSIFLQNYVSLT. At 126-154 the chain is on the cytoplasmic side; that stretch reads EGSRDVALPSLFNGQWIVGSSENFSASIT. Residues 155-175 form a helical membrane-spanning segment; the sequence is TMQAVIWIVTFLAMLALTIFI. Residues 176 to 203 are Periplasmic-facing; the sequence is RYSRMGRACRACAEDLKMASLLGINTDR. Residues 204–224 form a helical membrane-spanning segment; sequence VIALTFVIGAAMAAVAGVLLG. Residues 225-246 lie on the Cytoplasmic side of the membrane; sequence QFYGVINPYIGFMAGMKAFTAA. A helical transmembrane segment spans residues 247 to 266; that stretch reads VLGGIGSIPGAMIGGLILGV. At 267–280 the chain is on the periplasmic side; it reads AEALSSAYLSTEYK. Residues 281 to 301 traverse the membrane as a helical segment; it reads DVVSFALLILVLLVMPTGILG. Residues 302–308 lie on the Cytoplasmic side of the membrane; the sequence is RPEVEKV.

Belongs to the binding-protein-dependent transport system permease family. LivHM subfamily.

It is found in the cell inner membrane. Functionally, part of the binding-protein-dependent transport system for branched-chain amino acids. Probably responsible for the translocation of the substrates across the membrane. This is High-affinity branched-chain amino acid transport system permease protein LivH (livH) from Salmonella typhimurium (strain LT2 / SGSC1412 / ATCC 700720).